A 150-amino-acid polypeptide reads, in one-letter code: Meiotically up-regulated gene 108 protein (150 aa).

Positions 1 to 11 (MANRFTSSDQT) are enriched in polar residues. A disordered region spans residues 1–150 (MANRFTSSDQ…RDISLLGSTI (150 aa)). The span at 12 to 23 (QETHGHHVDKHS) shows a compositional bias: basic and acidic residues. Residues 83 to 93 (NRSSQHTGRVN) show a composition bias toward polar residues.

The protein resides in the cytoplasm. It localises to the nucleus. Has a role in meiosis. This Schizosaccharomyces pombe (strain 972 / ATCC 24843) (Fission yeast) protein is Meiotically up-regulated gene 108 protein (mug108).